Here is a 551-residue protein sequence, read N- to C-terminus: MRAFFLPFIQDALHKAGIETDKEIQIDKPNDKKFGDFSTNIAFLLAKEARKNPRELATQLIGLFAFPEGTVTKTEVAGPGFINFHLAPAFFMRSAQEVLTQGEKFGCTESGKGQKAIVEYVSANPTGPLTIGRGRGGVLGDCIANLLETQGYEVTREYYFNDAGRQMQILAESVRYRYLEKCGQTVEFPETHYQGDYIGEIAGTLFIEHSDELASSDELGIFKETAEAVIFSSIRRTLERIGITHDSFFNEHTLYQWNEGEASGNQKVIDALEAKDFIGRYDGATWFMTTKLGQEKDKVLIKSSGDPSYRLPDIAYHVTKFERGFDLMVNVFGADHIDEYPDVLEALKILGYDASKVKIAINQFVTTTVGGQTVKMSTRKGNADLLDDLIEDVGADATRLFFIMRSKDSHLNFDVELAKKQSKDNPVFYLQYAHARICSLVRLAEKEVGFDEAAATGASLPLLDSEPEIDLASALLDFPDVIQSCLRLLEPQKMVEYLHTVAERYHKFYQECPILKADENIRTARLELSLTVRQVLRNGFRILGISAPESM.

The 'HIGH' region signature appears at 123–133; it reads ANPTGPLTIGR.

Belongs to the class-I aminoacyl-tRNA synthetase family. In terms of assembly, monomer.

It is found in the cytoplasm. The catalysed reaction is tRNA(Arg) + L-arginine + ATP = L-arginyl-tRNA(Arg) + AMP + diphosphate. This is Arginine--tRNA ligase from Chlorobaculum parvum (strain DSM 263 / NCIMB 8327) (Chlorobium vibrioforme subsp. thiosulfatophilum).